A 1162-amino-acid chain; its full sequence is Carbamoyl phosphate synthase large chain (1162 aa).

Residues Met1 to Glu456 are carboxyphosphate synthetic domain. ATP-binding residues include Arg129, Arg222, Gly228, Gly229, Glu261, Val263, Glu268, Gly294, Val295, His296, Gln338, and Glu352. The ATP-grasp 1 domain occupies Glu186–Val381. Mg(2+) contacts are provided by Gln338, Glu352, and Asn354. 3 residues coordinate Mn(2+): Gln338, Glu352, and Asn354. The interval Thr457–Ala613 is oligomerization domain. A carbamoyl phosphate synthetic domain region spans residues Glu614 to Gly1025. One can recognise an ATP-grasp 2 domain in the interval Gln742–Ala954. 10 residues coordinate ATP: Arg778, Thr838, Leu840, Glu845, Gly870, Ile871, His872, Ser873, Gln913, and Glu925. Residues Gln913, Glu925, and Asn927 each coordinate Mg(2+). 3 residues coordinate Mn(2+): Gln913, Glu925, and Asn927. An MGS-like domain is found at Val1026–Ser1162. The allosteric domain stretch occupies residues Val1026–Ser1162.

The protein belongs to the CarB family. In terms of assembly, composed of two chains; the small (or glutamine) chain promotes the hydrolysis of glutamine to ammonia, which is used by the large (or ammonia) chain to synthesize carbamoyl phosphate. Tetramer of heterodimers (alpha,beta)4. Mg(2+) serves as cofactor. Mn(2+) is required as a cofactor.

The catalysed reaction is hydrogencarbonate + L-glutamine + 2 ATP + H2O = carbamoyl phosphate + L-glutamate + 2 ADP + phosphate + 2 H(+). It catalyses the reaction hydrogencarbonate + NH4(+) + 2 ATP = carbamoyl phosphate + 2 ADP + phosphate + 2 H(+). The protein operates within amino-acid biosynthesis; L-arginine biosynthesis; carbamoyl phosphate from bicarbonate: step 1/1. Its pathway is pyrimidine metabolism; UMP biosynthesis via de novo pathway; (S)-dihydroorotate from bicarbonate: step 1/3. Its function is as follows. Large subunit of the glutamine-dependent carbamoyl phosphate synthetase (CPSase). CPSase catalyzes the formation of carbamoyl phosphate from the ammonia moiety of glutamine, carbonate, and phosphate donated by ATP, constituting the first step of 2 biosynthetic pathways, one leading to arginine and/or urea and the other to pyrimidine nucleotides. The large subunit (synthetase) binds the substrates ammonia (free or transferred from glutamine from the small subunit), hydrogencarbonate and ATP and carries out an ATP-coupled ligase reaction, activating hydrogencarbonate by forming carboxy phosphate which reacts with ammonia to form carbamoyl phosphate. The chain is Carbamoyl phosphate synthase large chain from Brucella suis biovar 1 (strain 1330).